The sequence spans 213 residues: MQTSLNRALNGLRVSRETVEKLEHFASLFQKWARSINLVAPSTLDDLWRRHILDSIQLFQLSPAPKTWVDLGSGGGFPGVITAICLSETESGWVHLVESNNKKAAFLRVALRETAARGTVHPIRIEEAPAEIPTCDAISARALSDLSQLLEYCAPWMTVEASRTIAFFHKGRDYQLEIDKAVSRFQFDLVKHASVVEPDSVVLEVANLSRRTK.

S-adenosyl-L-methionine is bound by residues glycine 72, phenylalanine 77, 125-126 (IE), and arginine 141.

This sequence belongs to the methyltransferase superfamily. RNA methyltransferase RsmG family.

The protein localises to the cytoplasm. It carries out the reaction guanosine(527) in 16S rRNA + S-adenosyl-L-methionine = N(7)-methylguanosine(527) in 16S rRNA + S-adenosyl-L-homocysteine. Specifically methylates the N7 position of guanine in position 527 of 16S rRNA. This Sinorhizobium medicae (strain WSM419) (Ensifer medicae) protein is Ribosomal RNA small subunit methyltransferase G.